The sequence spans 191 residues: UPF0312 protein Shewmr7_1249 (191 aa).

Positions 1-22 are cleaved as a signal peptide; it reads MKKQLLAALIGGFLLAPMAASA.

It belongs to the UPF0312 family. Type 1 subfamily.

The protein resides in the periplasm. This Shewanella sp. (strain MR-7) protein is UPF0312 protein Shewmr7_1249.